A 147-amino-acid polypeptide reads, in one-letter code: uncharacterized protein (147 aa).

An HTH marR-type domain is found at 11–147; it reads NTSPGFLLWQ…SGLQELLKHE (137 aa). Residues 61–84 constitute a DNA-binding region (H-T-H motif); that stretch reads QKKLASFSQTNIMMVSEVVRTLEK.

This is an uncharacterized protein from Bacillus subtilis (strain 168).